We begin with the raw amino-acid sequence, 222 residues long: Ribosomal RNA small subunit methyltransferase G (222 aa).

3 residues coordinate S-adenosyl-L-methionine: glycine 80, leucine 85, and arginine 149.

This sequence belongs to the methyltransferase superfamily. RNA methyltransferase RsmG family.

The protein localises to the cytoplasm. Specifically methylates the N7 position of a guanine in 16S rRNA. This is Ribosomal RNA small subunit methyltransferase G from Treponema pallidum (strain Nichols).